We begin with the raw amino-acid sequence, 150 residues long: Large ribosomal subunit protein bL9 (150 aa).

This sequence belongs to the bacterial ribosomal protein bL9 family.

In terms of biological role, binds to the 23S rRNA. The sequence is that of Large ribosomal subunit protein bL9 from Polynucleobacter necessarius subsp. necessarius (strain STIR1).